Here is a 289-residue protein sequence, read N- to C-terminus: Zinc finger matrin-type protein 3 (289 aa).

A disordered region spans residues 1 to 59 (MILLQHAGLPPPKRPSSSPPMSVAARSTGALQLPPQKPFGQEASLPLAGEEEPPKGGEQ). The segment covering 9–18 (LPPPKRPSSS) has biased composition (pro residues). 2 consecutive Matrin-type zinc fingers follow at residues 70–100 (LYCK…KLRN) and 147–177 (DYCK…RLRL). Polar residues predominate over residues 180 to 191 (AQSNSFSDSSEV). Residues 180 to 200 (AQSNSFSDSSEVGQRRTRKEG) form a disordered region. Residues 246–276 (FYCSMCNVGAGEEVEFRQHLESKQHKSKVSE) form a Matrin-type 3 zinc finger.

Interacts with dsRNA.

Its subcellular location is the nucleus. It localises to the nucleolus. Functionally, acts as a bona fide target gene of p53/TP53. May play a role in the TP53-dependent growth regulatory pathway. May contribute to TP53-mediated apoptosis by regulation of TP53 expression and translocation to the nucleus and nucleolus. The polypeptide is Zinc finger matrin-type protein 3 (Bos taurus (Bovine)).